The chain runs to 549 residues: Arginine-containing cyclodipeptide synthase amaA (549 aa).

The short motif at 445–449 (DDRAE) is the Conserved DDXXE motif element.

Belongs to the arginine-containing cyclodipeptide synthase family.

The enzyme catalyses L-prolyl-tRNA(Pro) + L-arginyl-tRNA(Arg) = cyclo(L-arginyl-L-prolyl) + tRNA(Pro) + tRNA(Arg) + 2 H(+). Its pathway is secondary metabolite biosynthesis. Its function is as follows. Arginine-containing cyclodipeptide synthase; part of the cluster that mediates the biosynthesis of a highly modified cyclo-arginine-proline dipeptide (cRP). Within the pathway, amaA acts as the scaffold-generating enzyme and is responsible for formation of the cyclo-Arg-Pro diketopiperazine (cRW) from L-arginyl-tRNA(Arg) + L-prolyl-tRNA(Pro). Additional enzymes from the cluster then further modify the cyclo-Arg-Pro diketopiperazine (cRW) scaffold. The polypeptide is Arginine-containing cyclodipeptide synthase amaA (Apiospora montagnei (Sphaeria apiospora)).